The chain runs to 196 residues: Adenylate kinase (196 aa).

9–17 (GIPGVGKST) serves as a coordination point for ATP.

This sequence belongs to the archaeal adenylate kinase family.

Its subcellular location is the cytoplasm. The enzyme catalyses AMP + ATP = 2 ADP. This Pyrococcus horikoshii (strain ATCC 700860 / DSM 12428 / JCM 9974 / NBRC 100139 / OT-3) protein is Adenylate kinase (adkA).